The primary structure comprises 460 residues: Elongation factor 1-alpha (460 aa).

A N,N,N-trimethylglycine modification is found at glycine 2. Residue lysine 3 is modified to N6,N6-dimethyllysine; alternate. N6-methyllysine; alternate is present on lysine 3. The tr-type G domain maps to 6–241 (KTHINVVVIG…DAIEPPKRPT (236 aa)). The tract at residues 15 to 22 (GHVDSGKS) is G1. GTP is bound at residue 15–22 (GHVDSGKS). An N6-methyllysine modification is found at lysine 31. The G2 stretch occupies residues 71 to 75 (GITID). Lysine 80 carries the N6,N6,N6-trimethyllysine modification. Residues 92–95 (DAPG) form a G3 region. Residues 92–96 (DAPGH) and 154–157 (NKMD) each bind GTP. The interval 154 to 157 (NKMD) is G4. The tract at residues 193-195 (SGF) is G5. Residue lysine 317 is modified to N6,N6-dimethyllysine; alternate. Position 317 is an N6-methyllysine; alternate (lysine 317). At lysine 391 the chain carries N6-methyllysine.

Belongs to the TRAFAC class translation factor GTPase superfamily. Classic translation factor GTPase family. EF-Tu/EF-1A subfamily.

The protein localises to the cytoplasm. Its function is as follows. This protein promotes the GTP-dependent binding of aminoacyl-tRNA to the A-site of ribosomes during protein biosynthesis. The chain is Elongation factor 1-alpha (tef-1) from Neurospora crassa (strain ATCC 24698 / 74-OR23-1A / CBS 708.71 / DSM 1257 / FGSC 987).